A 513-amino-acid chain; its full sequence is Zinc finger CCCH-type with G patch domain-containing protein (513 aa).

The C3H1-type zinc-finger motif lies at 155 to 178; the sequence is PCSYYLEGECRFDEAKCRFSHGAL. Composition is skewed to acidic residues over residues 252 to 261 and 273 to 283; these read DQDEDDELSS and SDEAESDMDDL. The disordered stretch occupies residues 252-283; it reads DQDEDDELSSEESTSSMRDASSDEAESDMDDL. The G-patch domain maps to 312 to 358; it reads TRGIGSKLMEKMGYIHGTGLGSEGRGIVTPVSAQILPQGRSLDACME. Disordered stretches follow at residues 411–430 and 477–513; these read PGES…NNEL and QVQM…MFEF. Over residues 477–495 the composition is skewed to polar residues; it reads QVQMQSHKQELATLQAQER. The span at 496 to 513 shows a compositional bias: basic and acidic residues; that stretch reads SLSKEQQTRKSKNKMFEF.

The protein localises to the nucleus. In terms of biological role, transcription repressor. The sequence is that of Zinc finger CCCH-type with G patch domain-containing protein from Drosophila sechellia (Fruit fly).